A 188-amino-acid chain; its full sequence is Chitin synthase 2 (188 aa).

The protein belongs to the chitin synthase family.

It is found in the cell membrane. The enzyme catalyses [(1-&gt;4)-N-acetyl-beta-D-glucosaminyl](n) + UDP-N-acetyl-alpha-D-glucosamine = [(1-&gt;4)-N-acetyl-beta-D-glucosaminyl](n+1) + UDP + H(+). Functionally, polymerizes chitin, a structural polymer of the cell wall and septum, by transferring the sugar moiety of UDP-GlcNAc to the non-reducing end of the growing chitin polymer. This chain is Chitin synthase 2 (CHS2), found in Exophiala jeanselmei (Dematiaceous fungus).